The sequence spans 221 residues: Thiamine-phosphate synthase (221 aa).

Residues 41 to 45 (QLRDK) and asparagine 82 each bind 4-amino-2-methyl-5-(diphosphooxymethyl)pyrimidine. Mg(2+) is bound by residues aspartate 83 and aspartate 102. Serine 120 is a binding site for 4-amino-2-methyl-5-(diphosphooxymethyl)pyrimidine. A 2-[(2R,5Z)-2-carboxy-4-methylthiazol-5(2H)-ylidene]ethyl phosphate-binding site is contributed by 146 to 148 (TPT). Residue lysine 149 participates in 4-amino-2-methyl-5-(diphosphooxymethyl)pyrimidine binding. Glycine 177 is a 2-[(2R,5Z)-2-carboxy-4-methylthiazol-5(2H)-ylidene]ethyl phosphate binding site.

It belongs to the thiamine-phosphate synthase family. Requires Mg(2+) as cofactor.

It carries out the reaction 2-[(2R,5Z)-2-carboxy-4-methylthiazol-5(2H)-ylidene]ethyl phosphate + 4-amino-2-methyl-5-(diphosphooxymethyl)pyrimidine + 2 H(+) = thiamine phosphate + CO2 + diphosphate. It catalyses the reaction 2-(2-carboxy-4-methylthiazol-5-yl)ethyl phosphate + 4-amino-2-methyl-5-(diphosphooxymethyl)pyrimidine + 2 H(+) = thiamine phosphate + CO2 + diphosphate. The catalysed reaction is 4-methyl-5-(2-phosphooxyethyl)-thiazole + 4-amino-2-methyl-5-(diphosphooxymethyl)pyrimidine + H(+) = thiamine phosphate + diphosphate. It participates in cofactor biosynthesis; thiamine diphosphate biosynthesis; thiamine phosphate from 4-amino-2-methyl-5-diphosphomethylpyrimidine and 4-methyl-5-(2-phosphoethyl)-thiazole: step 1/1. Its function is as follows. Condenses 4-methyl-5-(beta-hydroxyethyl)thiazole monophosphate (THZ-P) and 2-methyl-4-amino-5-hydroxymethyl pyrimidine pyrophosphate (HMP-PP) to form thiamine monophosphate (TMP). The chain is Thiamine-phosphate synthase from Mycolicibacterium vanbaalenii (strain DSM 7251 / JCM 13017 / BCRC 16820 / KCTC 9966 / NRRL B-24157 / PYR-1) (Mycobacterium vanbaalenii).